Here is a 424-residue protein sequence, read N- to C-terminus: Enolase (424 aa).

Glutamine 162 lines the (2R)-2-phosphoglycerate pocket. Glutamate 204 (proton donor) is an active-site residue. Residues aspartate 241, glutamate 284, and aspartate 311 each coordinate Mg(2+). Residues lysine 336, arginine 365, serine 366, and lysine 387 each contribute to the (2R)-2-phosphoglycerate site. Catalysis depends on lysine 336, which acts as the Proton acceptor.

The protein belongs to the enolase family. It depends on Mg(2+) as a cofactor.

The protein localises to the cytoplasm. It is found in the secreted. It localises to the cell surface. It carries out the reaction (2R)-2-phosphoglycerate = phosphoenolpyruvate + H2O. It participates in carbohydrate degradation; glycolysis; pyruvate from D-glyceraldehyde 3-phosphate: step 4/5. Its function is as follows. Catalyzes the reversible conversion of 2-phosphoglycerate (2-PG) into phosphoenolpyruvate (PEP). It is essential for the degradation of carbohydrates via glycolysis. This Mesorhizobium japonicum (strain LMG 29417 / CECT 9101 / MAFF 303099) (Mesorhizobium loti (strain MAFF 303099)) protein is Enolase.